Consider the following 99-residue polypeptide: NADH-quinone oxidoreductase subunit K (99 aa).

3 helical membrane passes run 3–23, 28–48, and 59–79; these read PANYLYLSVLLFTIGASGVLL, IVMFMCVELMLNAVNLAFVTF, and MIAFFTMVVAACEVVVGLAII.

It belongs to the complex I subunit 4L family. NDH-1 is composed of 14 different subunits. Subunits NuoA, H, J, K, L, M, N constitute the membrane sector of the complex.

The protein localises to the cell membrane. The enzyme catalyses a quinone + NADH + 5 H(+)(in) = a quinol + NAD(+) + 4 H(+)(out). Its function is as follows. NDH-1 shuttles electrons from NADH, via FMN and iron-sulfur (Fe-S) centers, to quinones in the respiratory chain. The immediate electron acceptor for the enzyme in this species is believed to be a menaquinone. Couples the redox reaction to proton translocation (for every two electrons transferred, four hydrogen ions are translocated across the cytoplasmic membrane), and thus conserves the redox energy in a proton gradient. This chain is NADH-quinone oxidoreductase subunit K, found in Mycobacterium bovis (strain ATCC BAA-935 / AF2122/97).